The chain runs to 381 residues: Cytochrome b (381 aa).

4 helical membrane passes run 34 to 54 (FGSL…FLAM), 78 to 99 (WLIR…YLHI), 114 to 134 (WNIG…GYVL), and 179 to 199 (FFAF…IHLL). Heme b contacts are provided by His-84 and His-98. Positions 183 and 197 each coordinate heme b. Residue His-202 coordinates a ubiquinone. The next 4 membrane-spanning stretches (helical) occupy residues 227-247 (YKDL…ALFT), 289-309 (LGGV…PLLH), 321-341 (LTQI…WIGG), and 348-368 (FIMV…IIMP).

The protein belongs to the cytochrome b family. The cytochrome bc1 complex contains 3 respiratory subunits (MT-CYB, CYC1 and UQCRFS1), 2 core proteins (UQCRC1 and UQCRC2) and probably 6 low-molecular weight proteins. It depends on heme b as a cofactor.

Its subcellular location is the mitochondrion inner membrane. Its function is as follows. Component of the ubiquinol-cytochrome c reductase complex (complex III or cytochrome b-c1 complex) that is part of the mitochondrial respiratory chain. The b-c1 complex mediates electron transfer from ubiquinol to cytochrome c. Contributes to the generation of a proton gradient across the mitochondrial membrane that is then used for ATP synthesis. This is Cytochrome b (mt-cyb) from Negaprion brevirostris (Lemon shark).